The primary structure comprises 118 residues: UPF0344 protein Aflv_2205 (118 aa).

The next 4 membrane-spanning stretches (helical) occupy residues 4–24 (AHIT…ALQA), 32–52 (MLHM…AWIL), 60–80 (FLYI…EMIL), and 96–116 (FIVA…GFSF).

The protein belongs to the UPF0344 family.

Its subcellular location is the cell membrane. This Anoxybacillus flavithermus (strain DSM 21510 / WK1) protein is UPF0344 protein Aflv_2205.